We begin with the raw amino-acid sequence, 302 residues long: Dermonecrotic toxin LiSicTox-alphaIA1bii (302 aa).

An N-terminal signal peptide occupies residues 1 to 14 (ARVVLGCWSVLSQA). A propeptide spanning residues 15-22 (AQTDDEER) is cleaved from the precursor. His34 is a catalytic residue. 2 residues coordinate Mg(2+): Glu54 and Asp56. His70 acts as the Nucleophile in catalysis. 2 disulfide bridges follow: Cys74/Cys80 and Cys76/Cys219. Asp114 contributes to the Mg(2+) binding site.

This sequence belongs to the arthropod phospholipase D family. Class II subfamily. Class IIa sub-subfamily. It depends on Mg(2+) as a cofactor. As to expression, expressed by the venom gland.

The protein resides in the secreted. The catalysed reaction is an N-(acyl)-sphingosylphosphocholine = an N-(acyl)-sphingosyl-1,3-cyclic phosphate + choline. It catalyses the reaction an N-(acyl)-sphingosylphosphoethanolamine = an N-(acyl)-sphingosyl-1,3-cyclic phosphate + ethanolamine. It carries out the reaction a 1-acyl-sn-glycero-3-phosphocholine = a 1-acyl-sn-glycero-2,3-cyclic phosphate + choline. The enzyme catalyses a 1-acyl-sn-glycero-3-phosphoethanolamine = a 1-acyl-sn-glycero-2,3-cyclic phosphate + ethanolamine. In terms of biological role, dermonecrotic toxins cleave the phosphodiester linkage between the phosphate and headgroup of certain phospholipids (sphingolipid and lysolipid substrates), forming an alcohol (often choline) and a cyclic phosphate. This toxin acts on sphingomyelin (SM). It may also act on ceramide phosphoethanolamine (CPE), lysophosphatidylcholine (LPC) and lysophosphatidylethanolamine (LPE), but not on lysophosphatidylserine (LPS), and lysophosphatidylglycerol (LPG). It acts by transphosphatidylation, releasing exclusively cyclic phosphate products as second products. Induces hemolysis, dermonecrosis, vascular permeability and platelet aggregation. The chain is Dermonecrotic toxin LiSicTox-alphaIA1bii from Loxosceles intermedia (Brown spider).